A 256-amino-acid chain; its full sequence is UPF0246 protein Bpet1601 (256 aa).

Belongs to the UPF0246 family.

The sequence is that of UPF0246 protein Bpet1601 from Bordetella petrii (strain ATCC BAA-461 / DSM 12804 / CCUG 43448).